The sequence spans 414 residues: MFRALARASATLGPQVAGWARTMATCQLLVAPPEALLRPLSIPNRLLLGPGPSNLAPRVLVAGGKQMIGHMHKEMFQIMDDIKQGIQYVFQTKNPLTLAISGSGHCALEAALFNILEPGDPFLVGVNGIWGQRAADIGERIGARVHPMIKDPGNHYTLQELEEALAQHKPVLLFLTQGESSSGVLQPLDGYGELCHRYNCLLLVDSVASLCGTPIYMDQQGIDVLYSGSQKVLNSPPGTSLISFSDKAKNKIYTRKTKPVSFYLDMKWLANIWGCDGKPRIYHHTTPVVSLYSLRESLALIAEQGLENSWRQHREVTAYLHGRLQGLGLQLFVKDPALRLPTVTTVAVPAGYDWRDIVNYVMDHFDIEITGGLGPSMGKVLRIGLLGCNATRENVDRVIQALQEALQRCSRNKL.

The N-terminal 23 residues, 1 to 23 (MFRALARASATLGPQVAGWARTM), are a transit peptide targeting the mitochondrion. An N6-(pyridoxal phosphate)lysine modification is found at Lys-231. At Lys-247 the chain carries N6-acetyllysine; alternate. Lys-247 carries the N6-succinyllysine; alternate modification. N6-acetyllysine is present on residues Lys-256 and Lys-334. Arg-382 is a binding site for substrate. Positions 412 to 414 (NKL) match the Microbody targeting signal motif.

Belongs to the class-V pyridoxal-phosphate-dependent aminotransferase family. As to quaternary structure, homodimer. Requires pyridoxal 5'-phosphate as cofactor.

The protein resides in the peroxisome. It localises to the mitochondrion matrix. It carries out the reaction L-serine + pyruvate = 3-hydroxypyruvate + L-alanine. It catalyses the reaction glyoxylate + L-alanine = glycine + pyruvate. Functionally, catalyzes the transamination of glyoxylate to glycine and contributes to the glyoxylate detoxification. Its function is as follows. Catalyzes the transamination between L-serine and pyruvate and contributes to gluconeogenesis from the L-serine metabolism. The polypeptide is Alanine--glyoxylate aminotransferase (Felis catus (Cat)).